We begin with the raw amino-acid sequence, 118 residues long: Large ribosomal subunit protein uL22c (118 aa).

This sequence belongs to the universal ribosomal protein uL22 family. Part of the 50S ribosomal subunit.

It localises to the plastid. The protein localises to the chloroplast. This protein binds specifically to 23S rRNA. Its function is as follows. The globular domain of the protein is located near the polypeptide exit tunnel on the outside of the subunit, while an extended beta-hairpin is found that lines the wall of the exit tunnel in the center of the 70S ribosome. This is Large ribosomal subunit protein uL22c (rpl22) from Physcomitrium patens (Spreading-leaved earth moss).